A 116-amino-acid polypeptide reads, in one-letter code: HVA22-like protein e (116 aa).

The next 3 helical transmembrane spans lie at 12–32, 42–62, and 63–83; these read HSLA…VIAI, QWLA…ILQS, and LLEW…WLVL.

The protein belongs to the DP1 family. Predominantly expressed in stem.

It localises to the membrane. This chain is HVA22-like protein e (HVA22E), found in Arabidopsis thaliana (Mouse-ear cress).